The chain runs to 357 residues: UDP-xylose transporter 3 (357 aa).

10 consecutive transmembrane segments (helical) span residues 7–27 (FQLGTIGALSLSVVSSVSIVI), 31–51 (ALISTLGFTFATTLTSWHLLV), 75–95 (VMGFGILNGISIGLLNLSLGF), 100–120 (FYQMTKLAIIPCTVLLETLFF), 132–152 (LTILLLGVGIATVTDLQLNML), 154–174 (SVLSLLAVVTTCVAQIMTNTI), 194–214 (AITLFVTGPFLDGLLTNQNVF), 224–244 (FFIVLSCLISVSVNFSTFLVI), 250–270 (VTYQVLGHLKTCLVLAFGYVL), and 280–300 (ILGILVAVIGMVVYSYYCSIE). Ser-334 bears the Phosphoserine mark.

This sequence belongs to the TPT transporter family. TPT (TC 2.A.7.9) subfamily. As to expression, ubiquitous.

It is found in the golgi apparatus membrane. Nucleotide-sugar transporter that transports UDP-xylose and UMP in a strict counter-exchange mode. This is UDP-xylose transporter 3 from Arabidopsis thaliana (Mouse-ear cress).